The sequence spans 258 residues: Thiazole synthase (258 aa).

The active-site Schiff-base intermediate with DXP is Lys-100. 1-deoxy-D-xylulose 5-phosphate-binding positions include Gly-161, 187 to 188, and 209 to 210; these read AG and NT.

This sequence belongs to the ThiG family. Homotetramer. Forms heterodimers with either ThiH or ThiS.

It localises to the cytoplasm. The catalysed reaction is [ThiS sulfur-carrier protein]-C-terminal-Gly-aminoethanethioate + 2-iminoacetate + 1-deoxy-D-xylulose 5-phosphate = [ThiS sulfur-carrier protein]-C-terminal Gly-Gly + 2-[(2R,5Z)-2-carboxy-4-methylthiazol-5(2H)-ylidene]ethyl phosphate + 2 H2O + H(+). The protein operates within cofactor biosynthesis; thiamine diphosphate biosynthesis. In terms of biological role, catalyzes the rearrangement of 1-deoxy-D-xylulose 5-phosphate (DXP) to produce the thiazole phosphate moiety of thiamine. Sulfur is provided by the thiocarboxylate moiety of the carrier protein ThiS. In vitro, sulfur can be provided by H(2)S. The sequence is that of Thiazole synthase from Campylobacter jejuni subsp. doylei (strain ATCC BAA-1458 / RM4099 / 269.97).